Reading from the N-terminus, the 220-residue chain is Iron-sulfur cluster repair protein YtfE (220 aa).

Belongs to the RIC family. YtfE subfamily. In terms of assembly, homodimer.

Its subcellular location is the cytoplasm. Functionally, di-iron-containing protein involved in the repair of iron-sulfur clusters damaged by oxidative and nitrosative stress conditions. The polypeptide is Iron-sulfur cluster repair protein YtfE (Enterobacter sp. (strain 638)).